We begin with the raw amino-acid sequence, 101 residues long: Ascorbate-specific PTS system EIIB component (101 aa).

The region spanning 3 to 96 (VRILAVCGNG…KLLEVIKAHF (94 aa)) is the PTS EIIB type-2 domain. The active-site Phosphocysteine intermediate is the cysteine 9. A Phosphocysteine modification is found at cysteine 9.

Its subcellular location is the cytoplasm. It catalyses the reaction N(pros)-phospho-L-histidyl-[protein] + L-ascorbate(out) = L-ascorbate 6-phosphate(in) + L-histidyl-[protein]. Its function is as follows. The phosphoenolpyruvate-dependent sugar phosphotransferase system (sugar PTS), a major carbohydrate active transport system, catalyzes the phosphorylation of incoming sugar substrates concomitantly with their translocation across the cell membrane. The enzyme II UlaABC PTS system is involved in ascorbate transport. The protein is Ascorbate-specific PTS system EIIB component (ulaB) of Shigella sonnei (strain Ss046).